Reading from the N-terminus, the 1024-residue chain is Error-prone DNA polymerase (1024 aa).

Belongs to the DNA polymerase type-C family. DnaE2 subfamily.

It is found in the cytoplasm. The enzyme catalyses DNA(n) + a 2'-deoxyribonucleoside 5'-triphosphate = DNA(n+1) + diphosphate. Functionally, DNA polymerase involved in damage-induced mutagenesis and translesion synthesis (TLS). It is not the major replicative DNA polymerase. The chain is Error-prone DNA polymerase from Vibrio vulnificus (strain CMCP6).